Reading from the N-terminus, the 94-residue chain is uncharacterized protein (94 aa).

This is an uncharacterized protein from Archaeoglobus fulgidus (strain ATCC 49558 / DSM 4304 / JCM 9628 / NBRC 100126 / VC-16).